A 960-amino-acid chain; its full sequence is Glycine dehydrogenase (decarboxylating) (960 aa).

Lys709 is modified (N6-(pyridoxal phosphate)lysine).

It belongs to the GcvP family. As to quaternary structure, the glycine cleavage system is composed of four proteins: P, T, L and H. Pyridoxal 5'-phosphate is required as a cofactor.

It catalyses the reaction N(6)-[(R)-lipoyl]-L-lysyl-[glycine-cleavage complex H protein] + glycine + H(+) = N(6)-[(R)-S(8)-aminomethyldihydrolipoyl]-L-lysyl-[glycine-cleavage complex H protein] + CO2. Its function is as follows. The glycine cleavage system catalyzes the degradation of glycine. The P protein binds the alpha-amino group of glycine through its pyridoxal phosphate cofactor; CO(2) is released and the remaining methylamine moiety is then transferred to the lipoamide cofactor of the H protein. The protein is Glycine dehydrogenase (decarboxylating) of Edwardsiella ictaluri (strain 93-146).